We begin with the raw amino-acid sequence, 492 residues long: Adenylyltransferase and sulfurtransferase uba4 (492 aa).

Residues G99, D120, 127-131 (SNLHR), K144, and 188-189 (DN) contribute to the ATP site. Zn(2+)-binding residues include C237 and C240. The active-site Glycyl thioester intermediate; for adenylyltransferase activity is C254. Residues C317 and C320 each coordinate Zn(2+). The region spanning 378-490 (GSKEPTIIDV…WREQIDPDWP (113 aa)) is the Rhodanese domain. C445 serves as the catalytic Cysteine persulfide intermediate; for sulfurtransferase activity.

This sequence in the N-terminal section; belongs to the HesA/MoeB/ThiF family. UBA4 subfamily. The cofactor is Zn(2+).

The protein localises to the cytoplasm. Its subcellular location is the cytosol. It carries out the reaction [molybdopterin-synthase sulfur-carrier protein]-C-terminal Gly-Gly + ATP + H(+) = [molybdopterin-synthase sulfur-carrier protein]-C-terminal Gly-Gly-AMP + diphosphate. The enzyme catalyses [molybdopterin-synthase sulfur-carrier protein]-C-terminal Gly-Gly-AMP + S-sulfanyl-L-cysteinyl-[cysteine desulfurase] + AH2 = [molybdopterin-synthase sulfur-carrier protein]-C-terminal-Gly-aminoethanethioate + L-cysteinyl-[cysteine desulfurase] + A + AMP + 2 H(+). Its pathway is tRNA modification; 5-methoxycarbonylmethyl-2-thiouridine-tRNA biosynthesis. It functions in the pathway cofactor biosynthesis; molybdopterin biosynthesis. Plays a central role in 2-thiolation of mcm(5)S(2)U at tRNA wobble positions of cytosolic tRNA(Lys), tRNA(Glu) and tRNA(Gln). Also essential during biosynthesis of the molybdenum cofactor. Acts by mediating the C-terminal thiocarboxylation of sulfur carriers urm1 and mocs2a. Its N-terminus first activates urm1 and mocs2a as acyl-adenylates (-COAMP), then the persulfide sulfur on the catalytic cysteine is transferred to urm1 and mocs2a to form thiocarboxylation (-COSH) of their C-terminus. The reaction probably involves hydrogen sulfide that is generated from the persulfide intermediate and that acts as a nucleophile towards urm1 and mocs2a. Subsequently, a transient disulfide bond is formed. Does not use thiosulfate as sulfur donor; nfs1 probably acting as a sulfur donor for thiocarboxylation reactions. The chain is Adenylyltransferase and sulfurtransferase uba4 from Aspergillus clavatus (strain ATCC 1007 / CBS 513.65 / DSM 816 / NCTC 3887 / NRRL 1 / QM 1276 / 107).